The sequence spans 166 residues: Cofilin-1 (166 aa).

The residue at position 2 (alanine 2) is an N-acetylalanine. Serine 3 and serine 8 each carry phosphoserine. In terms of domain architecture, ADF-H spans 4 to 153; it reads GVAVSDGVIK…KDRCTLAEKL (150 aa). An N6-acetyllysine modification is found at lysine 13. The residue at position 25 (threonine 25) is a Phosphothreonine. Positions 30–34 match the Nuclear localization signal motif; it reads KKRKK. The residue at position 41 (serine 41) is a Phosphoserine. Position 63 is a phosphothreonine (threonine 63). Tyrosine 68 is subject to Phosphotyrosine. At lysine 73 the chain carries N6-acetyllysine. Position 82 is a phosphotyrosine (tyrosine 82). Residue lysine 132 forms a Glycyl lysine isopeptide (Lys-Gly) (interchain with G-Cter in SUMO2) linkage. Position 140 is a phosphotyrosine (tyrosine 140). N6-acetyllysine is present on lysine 144. A Phosphoserine modification is found at serine 156.

This sequence belongs to the actin-binding proteins ADF family. In terms of assembly, can bind G- and F-actin in a 1:1 ratio of cofilin to actin. It is a major component of intranuclear and cytoplasmic actin rods. Interacts with the subcortical maternal complex (SCMC) via interaction with TLE6 and NLRP5. Interacts with C9orf72. Post-translationally, inactivated by phosphorylation on Ser-3. Phosphorylated on Ser-3 in resting cells. Dephosphorylated by PDXP/chronophin; this restores its activity in promoting actin filament depolymerization. The phosphorylation of Ser-24 may prevent recognition of the nuclear localization signal. Phosphorylated via a ARRB1-RAC1-LIMK1-PAK1 cascade upon active ligand stimulation of atypical chemokine receptor ACKR2. As to expression, widely distributed in various tissues. Not found in skeletal muscle.

It localises to the nucleus matrix. Its subcellular location is the cytoplasm. It is found in the cytoskeleton. The protein localises to the cell projection. The protein resides in the ruffle membrane. It localises to the lamellipodium membrane. Its subcellular location is the lamellipodium. It is found in the growth cone. The protein localises to the axon. Its function is as follows. Binds to F-actin and exhibits pH-sensitive F-actin depolymerizing activity. In conjunction with the subcortical maternal complex (SCMC), plays an essential role for zygotes to progress beyond the first embryonic cell divisions via regulation of actin dynamics. Required for the centralization of the mitotic spindle and symmetric division of zygotes. Plays a role in the regulation of cell morphology and cytoskeletal organization in epithelial cells. Required for the up-regulation of atypical chemokine receptor ACKR2 from endosomal compartment to cell membrane, increasing its efficiency in chemokine uptake and degradation. Required for neural tube morphogenesis and neural crest cell migration. This chain is Cofilin-1 (Cfl1), found in Mus musculus (Mouse).